The primary structure comprises 343 residues: UDP-3-O-acylglucosamine N-acyltransferase 2 (343 aa).

The active-site Proton acceptor is the His251.

The protein belongs to the transferase hexapeptide repeat family. LpxD subfamily. As to quaternary structure, homotrimer.

It catalyses the reaction a UDP-3-O-[(3R)-3-hydroxyacyl]-alpha-D-glucosamine + a (3R)-hydroxyacyl-[ACP] = a UDP-2-N,3-O-bis[(3R)-3-hydroxyacyl]-alpha-D-glucosamine + holo-[ACP] + H(+). Its pathway is bacterial outer membrane biogenesis; LPS lipid A biosynthesis. Its function is as follows. Catalyzes the N-acylation of UDP-3-O-acylglucosamine using 3-hydroxyacyl-ACP as the acyl donor. Is involved in the biosynthesis of lipid A, a phosphorylated glycolipid that anchors the lipopolysaccharide to the outer membrane of the cell. This Legionella pneumophila (strain Lens) protein is UDP-3-O-acylglucosamine N-acyltransferase 2.